The following is a 326-amino-acid chain: ATP synthase gamma chain (326 aa).

Belongs to the ATPase gamma chain family. F-type ATPases have 2 components, CF(1) - the catalytic core - and CF(0) - the membrane proton channel. CF(1) has five subunits: alpha(3), beta(3), gamma(1), delta(1), epsilon(1). CF(0) has three main subunits: a, b and c.

It localises to the cell membrane. Produces ATP from ADP in the presence of a proton gradient across the membrane. The gamma chain is believed to be important in regulating ATPase activity and the flow of protons through the CF(0) complex. In Corynebacterium efficiens (strain DSM 44549 / YS-314 / AJ 12310 / JCM 11189 / NBRC 100395), this protein is ATP synthase gamma chain.